The primary structure comprises 215 residues: LexA repressor (215 aa).

A DNA-binding region (H-T-H motif) is located at residues 28–48; it reads RAEIAAELGFSSPNAAEEHLR. Catalysis depends on for autocatalytic cleavage activity residues S133 and K170.

The protein belongs to the peptidase S24 family. Homodimer.

The catalysed reaction is Hydrolysis of Ala-|-Gly bond in repressor LexA.. Represses a number of genes involved in the response to DNA damage (SOS response), including recA and lexA. In the presence of single-stranded DNA, RecA interacts with LexA causing an autocatalytic cleavage which disrupts the DNA-binding part of LexA, leading to derepression of the SOS regulon and eventually DNA repair. The polypeptide is LexA repressor (Burkholderia thailandensis (strain ATCC 700388 / DSM 13276 / CCUG 48851 / CIP 106301 / E264)).